The following is a 161-amino-acid chain: Probable chemoreceptor glutamine deamidase CheD (161 aa).

The protein belongs to the CheD family.

The catalysed reaction is L-glutaminyl-[protein] + H2O = L-glutamyl-[protein] + NH4(+). Probably deamidates glutamine residues to glutamate on methyl-accepting chemotaxis receptors (MCPs), playing an important role in chemotaxis. This is Probable chemoreceptor glutamine deamidase CheD from Lachnoclostridium phytofermentans (strain ATCC 700394 / DSM 18823 / ISDg) (Clostridium phytofermentans).